Consider the following 366-residue polypeptide: Protein sigma-NS (366 aa).

Residues 1 to 11 form an important for ssRNA-binding and formation of complexes region; the sequence is MASSLRAAISK.

This sequence belongs to the orthoreovirus sigma-NS protein family. In terms of assembly, homooligomer; in presence of RNA. Interacts with protein mu-NS; this interaction allows the localization of sigma-NS to the viral factories. Interacts with host G3BP1 (via C-terminus); this interaction induces the relocalization of G3BP1 and other SG proteins to the viral factories periphery.

It localises to the host cytoplasm. Its function is as follows. Protein that binds to ssRNA and participates with protein mu-NS in forming the matrix of viral factories, which are large inclusions in the host cytoplasm where replication intermediates are assembled and viral RNA replication takes place. Plays a role in the inhibition of the integrated stress response (ISR) to escape from host cell translational shutoff. Participates in the disruption of stress granules (SG) through its association with host G3BP1 and mu-NS. This chain is Protein sigma-NS (S3), found in Mammalia (T1L).